A 317-amino-acid chain; its full sequence is Gamma-glutamyl hydrolase (317 aa).

The N-terminal stretch at 1-24 (MASLGRLLCAWVLLLCGLASPGLS) is a signal peptide. Residues 25 to 317 (GSYERGSKRP…SSFQQAYMFN (293 aa)) enclose the Gamma-glutamyl hydrolase domain. Residues N46 and N100 are each glycosylated (N-linked (GlcNAc...) asparagine). C133 (nucleophile) is an active-site residue. N-linked (GlcNAc...) asparagine glycans are attached at residues N153, N162, N188, and N202. Residue H243 is the Proton donor of the active site. N-linked (GlcNAc...) asparagine glycosylation is present at N306.

Belongs to the peptidase C26 family. As to quaternary structure, homodimer.

Its subcellular location is the secreted. The protein resides in the extracellular space. It localises to the lysosome. It is found in the melanosome. It catalyses the reaction (6S)-5,6,7,8-tetrahydrofolyl-(gamma-L-Glu)(n) + (n-1) H2O = (6S)-5,6,7,8-tetrahydrofolate + (n-1) L-glutamate. With respect to regulation, activity is altered by insulin and estrogen. Functionally, hydrolyzes the polyglutamate sidechains of pteroylpolyglutamates. Progressively removes gamma-glutamyl residues from pteroylpoly-gamma-glutamate to yield pteroyl-alpha-glutamate (folic acid) and free glutamate. May play an important role in the bioavailability of dietary pteroylpolyglutamates and in the metabolism of pteroylpolyglutamates and antifolates. Exhibits either endo- or exopeptidase activity depending upon the tissue of origin. When secreted, it acts primarily as an endopeptidase. The polypeptide is Gamma-glutamyl hydrolase (Ggh) (Rattus norvegicus (Rat)).